The chain runs to 376 residues: Thymidine kinase (376 aa).

The tract at residues 1 to 47 (MASHAGQQHAPAFGQAARASGPTDGRAASRPSHRQGASEARGDPELP) is disordered. An ATP-binding site is contributed by 56-63 (GPHGVGKT). E84 functions as the Proton acceptor in the catalytic mechanism. Positions 102 and 126 each coordinate substrate. Residue R217 coordinates ATP. Position 223 (R223) interacts with substrate.

This sequence belongs to the herpesviridae thymidine kinase family. In terms of assembly, homodimer.

The catalysed reaction is thymidine + ATP = dTMP + ADP + H(+). Its function is as follows. Catalyzes the transfer of the gamma-phospho group of ATP to thymidine to generate dTMP in the salvage pathway of pyrimidine synthesis. The dTMP serves as a substrate for DNA polymerase during viral DNA replication. Allows the virus to be reactivated and to grow in non-proliferative cells lacking a high concentration of phosphorylated nucleic acid precursors. This is Thymidine kinase from Human herpesvirus 2 (strain 333) (HHV-2).